We begin with the raw amino-acid sequence, 261 residues long: Enolase-phosphatase E1 (261 aa).

Mg(2+) is bound by residues aspartate 16 and glutamate 18. Substrate-binding positions include 150–151 (SS) and lysine 184. Position 209 (aspartate 209) interacts with Mg(2+).

Belongs to the HAD-like hydrolase superfamily. MasA/MtnC family. Monomer. Requires Mg(2+) as cofactor.

The protein resides in the cytoplasm. It localises to the nucleus. It carries out the reaction 5-methylsulfanyl-2,3-dioxopentyl phosphate + H2O = 1,2-dihydroxy-5-(methylsulfanyl)pent-1-en-3-one + phosphate. The protein operates within amino-acid biosynthesis; L-methionine biosynthesis via salvage pathway; L-methionine from S-methyl-5-thio-alpha-D-ribose 1-phosphate: step 3/6. It participates in amino-acid biosynthesis; L-methionine biosynthesis via salvage pathway; L-methionine from S-methyl-5-thio-alpha-D-ribose 1-phosphate: step 4/6. Its function is as follows. Bifunctional enzyme that catalyzes the enolization of 2,3-diketo-5-methylthiopentyl-1-phosphate (DK-MTP-1-P) into the intermediate 2-hydroxy-3-keto-5-methylthiopentenyl-1-phosphate (HK-MTPenyl-1-P), which is then dephosphorylated to form the acireductone 1,2-dihydroxy-3-keto-5-methylthiopentene (DHK-MTPene). The sequence is that of Enolase-phosphatase E1 (Enoph1) from Rattus norvegicus (Rat).